Reading from the N-terminus, the 271-residue chain is NADPH-dependent 7-cyano-7-deazaguanine reductase (271 aa).

79-81 (IES) contributes to the substrate binding site. 81–82 (SK) contributes to the NADPH binding site. The Thioimide intermediate role is filled by cysteine 178. The active-site Proton donor is aspartate 185. A substrate-binding site is contributed by 217-218 (HE). 246-247 (RG) is a binding site for NADPH.

This sequence belongs to the GTP cyclohydrolase I family. QueF type 2 subfamily. Homodimer.

Its subcellular location is the cytoplasm. The enzyme catalyses 7-aminomethyl-7-carbaguanine + 2 NADP(+) = 7-cyano-7-deazaguanine + 2 NADPH + 3 H(+). It functions in the pathway tRNA modification; tRNA-queuosine biosynthesis. Functionally, catalyzes the NADPH-dependent reduction of 7-cyano-7-deazaguanine (preQ0) to 7-aminomethyl-7-deazaguanine (preQ1). The sequence is that of NADPH-dependent 7-cyano-7-deazaguanine reductase from Acinetobacter baylyi (strain ATCC 33305 / BD413 / ADP1).